The sequence spans 238 residues: 1-(5-phosphoribosyl)-5-[(5-phosphoribosylamino)methylideneamino] imidazole-4-carboxamide isomerase (238 aa).

Asp7 (proton acceptor) is an active-site residue. Catalysis depends on Asp129, which acts as the Proton donor.

Belongs to the HisA/HisF family.

The protein localises to the cytoplasm. It carries out the reaction 1-(5-phospho-beta-D-ribosyl)-5-[(5-phospho-beta-D-ribosylamino)methylideneamino]imidazole-4-carboxamide = 5-[(5-phospho-1-deoxy-D-ribulos-1-ylimino)methylamino]-1-(5-phospho-beta-D-ribosyl)imidazole-4-carboxamide. The protein operates within amino-acid biosynthesis; L-histidine biosynthesis; L-histidine from 5-phospho-alpha-D-ribose 1-diphosphate: step 4/9. This Leuconostoc mesenteroides subsp. mesenteroides (strain ATCC 8293 / DSM 20343 / BCRC 11652 / CCM 1803 / JCM 6124 / NCDO 523 / NBRC 100496 / NCIMB 8023 / NCTC 12954 / NRRL B-1118 / 37Y) protein is 1-(5-phosphoribosyl)-5-[(5-phosphoribosylamino)methylideneamino] imidazole-4-carboxamide isomerase.